We begin with the raw amino-acid sequence, 833 residues long: Leucine--tRNA ligase (833 aa).

The 'HIGH' region signature appears at 41–52; sequence PYPSGAGLHVGH. The 'KMSKS' region signature appears at 610–614; it reads KMSKS. Lys-613 is an ATP binding site.

Belongs to the class-I aminoacyl-tRNA synthetase family.

It localises to the cytoplasm. The enzyme catalyses tRNA(Leu) + L-leucine + ATP = L-leucyl-tRNA(Leu) + AMP + diphosphate. This is Leucine--tRNA ligase from Streptococcus agalactiae serotype Ia (strain ATCC 27591 / A909 / CDC SS700).